The sequence spans 112 residues: ATP synthase subunit c (112 aa).

2 helical membrane passes run 36–56 (FSVLAAGLGLGVAALGGAIGM) and 81–101 (MFIALAMIEAQVIYALVIALI).

Belongs to the ATPase C chain family. F-type ATPases have 2 components, F(1) - the catalytic core - and F(0) - the membrane proton channel. F(1) has five subunits: alpha(3), beta(3), gamma(1), delta(1), epsilon(1). F(0) has three main subunits: a(1), b(2) and c(10-14). The alpha and beta chains form an alternating ring which encloses part of the gamma chain. F(1) is attached to F(0) by a central stalk formed by the gamma and epsilon chains, while a peripheral stalk is formed by the delta and b chains.

Its subcellular location is the cell inner membrane. Its function is as follows. F(1)F(0) ATP synthase produces ATP from ADP in the presence of a proton or sodium gradient. F-type ATPases consist of two structural domains, F(1) containing the extramembraneous catalytic core and F(0) containing the membrane proton channel, linked together by a central stalk and a peripheral stalk. During catalysis, ATP synthesis in the catalytic domain of F(1) is coupled via a rotary mechanism of the central stalk subunits to proton translocation. Key component of the F(0) channel; it plays a direct role in translocation across the membrane. A homomeric c-ring of between 10-14 subunits forms the central stalk rotor element with the F(1) delta and epsilon subunits. In Campylobacter jejuni subsp. jejuni serotype O:6 (strain 81116 / NCTC 11828), this protein is ATP synthase subunit c.